Consider the following 373-residue polypeptide: MPRGGMDDHWPSSDDQGHDPKEPEQLRKLFIGGLSFETTDDSLREHFEQWGKLTDCVVMRDPQTKRSRGFGFVTYSCVEEVDASMSARPHKVDGRVVEPKRAVSREDSARPGAHLTVKKIFVGGIKEDTEEYHLRDYSESYGKIETIEVMEDRQSGKKRGFAFVTFDDHDTVDKIVVQKYHTINGHNCEVKKALSKQEMQTASAQRGRGGGGSNFMGRGGNYGGGDGGNFGRGGGGGFGNRGGYGGGGGRGGGGYGGGGDGYNGFGGDGGNYGGGPGYGGRGYGGSPGYGNQGGGYGGGGGGYDGYNESGNFGGGNYNDFGNYGGQQQSNYGPMKGGSFSGRSSGGSGSGPYGGGYGSGGGGGGGGSYGGRRF.

Positions 1-25 are disordered; it reads MPRGGMDDHWPSSDDQGHDPKEPEQ. RRM domains follow at residues 27–110 and 118–206; these read RKLF…DSAR and KKIF…SAQR. 2 disordered regions span residues 196–218 and 319–373; these read KQEM…FMGR and DFGN…GRRF. Residues 207–218 are compositionally biased toward gly residues; sequence GRGGGGSNFMGR. The segment covering 319-333 has biased composition (low complexity); sequence DFGNYGGQQQSNYGP. A compositionally biased stretch (gly residues) spans 334–373; the sequence is MKGGSFSGRSSGGSGSGPYGGGYGSGGGGGGGGSYGGRRF.

The protein localises to the nucleus. This Xenopus laevis (African clawed frog) protein is Heterogeneous nuclear ribonucleoprotein A3 homolog 1.